Consider the following 678-residue polypeptide: Penicillin-binding protein activator LpoA (678 aa).

Residues 1-26 form the signal peptide; that stretch reads MVPSTFSRLKAARCLPVVLAALIFAG. C27 carries the N-palmitoyl cysteine lipid modification. C27 carries S-diacylglycerol cysteine lipidation. Disordered regions lie at residues 302–340 and 496–528; these read DVAE…PVSA and ALTG…DDQF. Low complexity-rich tracts occupy residues 330 to 340 and 513 to 528; these read QPAAQPVPVSA and TTNN…DDQF.

It belongs to the LpoA family. As to quaternary structure, interacts with PBP1a.

The protein localises to the cell outer membrane. In terms of biological role, regulator of peptidoglycan synthesis that is essential for the function of penicillin-binding protein 1A (PBP1a). The chain is Penicillin-binding protein activator LpoA from Shigella sonnei (strain Ss046).